The primary structure comprises 143 residues: Large ribosomal subunit protein uL13c (143 aa).

The protein belongs to the universal ribosomal protein uL13 family. Part of the 50S ribosomal subunit.

The protein resides in the plastid. It localises to the chloroplast. The chain is Large ribosomal subunit protein uL13c from Gracilaria tenuistipitata var. liui (Red alga).